Here is a 224-residue protein sequence, read N- to C-terminus: MMTNLFSVFDPSAIFNLSLNWLSTFLGLLMIPSIYWLMPSRYNIVWNSILLTLHKEFKTLLGPSGHNGSTFIFISLFSLILFNNFMGLFPYIFTSTSHLTLTLSLALPLWLCFMLYGWINHTQHMFAHLVPQGTPAILMPFMVCIETISNIIRPGTLAVRLTANMIAGHLLLTLLGNTGPSMSYLLVTFLLTAQIALLVLESAVAMIQSYVFAVLSTLYSSEVN.

Transmembrane regions (helical) follow at residues 17–37 (LSLN…IYWL), 72–92 (IFIS…FPYI), 99–119 (LTLT…YGWI), 125–145 (MFAH…MVCI), 170–190 (LLLT…VTFL), and 195–215 (IALL…FAVL).

Belongs to the ATPase A chain family. As to quaternary structure, F-type ATPases have 2 components, CF(1) - the catalytic core - and CF(0) - the membrane proton channel. CF(1) has five subunits: alpha(3), beta(3), gamma(1), delta(1), epsilon(1). CF(0) has three main subunits: a, b and c.

The protein localises to the mitochondrion inner membrane. Mitochondrial membrane ATP synthase (F(1)F(0) ATP synthase or Complex V) produces ATP from ADP in the presence of a proton gradient across the membrane which is generated by electron transport complexes of the respiratory chain. F-type ATPases consist of two structural domains, F(1) - containing the extramembraneous catalytic core and F(0) - containing the membrane proton channel, linked together by a central stalk and a peripheral stalk. During catalysis, ATP synthesis in the catalytic domain of F(1) is coupled via a rotary mechanism of the central stalk subunits to proton translocation. Key component of the proton channel; it may play a direct role in the translocation of protons across the membrane. The polypeptide is ATP synthase subunit a (mt:ATPase6) (Drosophila simulans (Fruit fly)).